The following is a 528-amino-acid chain: Phosphoenolpyruvate carboxykinase (ATP) (528 aa).

Residues Arg-56, Tyr-192, and Lys-198 each contribute to the substrate site. Residues Lys-198, His-217, and 233-241 each bind ATP; that span reads GLSGTGKTT. The Mn(2+) site is built by Lys-198 and His-217. Mn(2+) is bound at residue Asp-254. The ATP site is built by Glu-282, Arg-319, and Thr-444. Arg-319 contacts substrate.

This sequence belongs to the phosphoenolpyruvate carboxykinase (ATP) family. Requires Mn(2+) as cofactor.

The protein localises to the cytoplasm. It catalyses the reaction oxaloacetate + ATP = phosphoenolpyruvate + ADP + CO2. It functions in the pathway carbohydrate biosynthesis; gluconeogenesis. Involved in the gluconeogenesis. Catalyzes the conversion of oxaloacetate (OAA) to phosphoenolpyruvate (PEP) through direct phosphoryl transfer between the nucleoside triphosphate and OAA. The protein is Phosphoenolpyruvate carboxykinase (ATP) of Bacillus cereus (strain B4264).